Consider the following 336-residue polypeptide: Immune-associated nucleotide-binding protein 6 (336 aa).

One can recognise an AIG1-type G domain in the interval 33–241 (EPVKNVVLVG…FTDTMHRRIQ (209 aa)). Residues 42-49 (GRTGNGKS) are G1. GTP contacts are provided by residues 42–50 (GRTGNGKSA) and S63. The segment at 69-73 (GVTTR) is G2. The tract at residues 91-94 (DTPG) is G3. A G4 region spans residues 161-164 (TCGD). A G5 region spans residues 200–202 (DNR). N201 provides a ligand contact to GTP. A coiled-coil region spans residues 237–270 (HRRIQEEAARVKREEKEIEEKNIADEEKAALKKQ).

This sequence belongs to the TRAFAC class TrmE-Era-EngA-EngB-Septin-like GTPase superfamily. AIG1/Toc34/Toc159-like paraseptin GTPase family. IAN subfamily. Mostly expressed in pollen. Also detected in lateral roots and radicles.

In Arabidopsis thaliana (Mouse-ear cress), this protein is Immune-associated nucleotide-binding protein 6.